The sequence spans 609 residues: Glutamine--fructose-6-phosphate aminotransferase [isomerizing] (609 aa).

The Nucleophile; for GATase activity role is filled by cysteine 2. The 218-residue stretch at cysteine 2–glycine 219 folds into the Glutamine amidotransferase type-2 domain. 2 consecutive SIS domains span residues isoleucine 280–threonine 426 and tryptophan 458–proline 599. Residue lysine 604 is the For Fru-6P isomerization activity of the active site.

Homodimer.

It localises to the cytoplasm. The enzyme catalyses D-fructose 6-phosphate + L-glutamine = D-glucosamine 6-phosphate + L-glutamate. Catalyzes the first step in hexosamine metabolism, converting fructose-6P into glucosamine-6P using glutamine as a nitrogen source. The chain is Glutamine--fructose-6-phosphate aminotransferase [isomerizing] from Chlamydia abortus (strain DSM 27085 / S26/3) (Chlamydophila abortus).